A 221-amino-acid chain; its full sequence is Prolactin-3B1 (221 aa).

A signal peptide spans Met1–Ser30. 2 disulfide bridges follow: Cys81-Cys196 and Cys213-Cys221.

Belongs to the somatotropin/prolactin family.

The protein resides in the secreted. This chain is Prolactin-3B1 (PRL3B1), found in Mesocricetus auratus (Golden hamster).